We begin with the raw amino-acid sequence, 171 residues long: Viral CASP8 and FADD-like apoptosis regulator (171 aa).

2 DED domains span residues M1–G74 and P92–V171.

Associates with the death-inducing signaling complex (DISC) formed by TNFRSF6, FADD and caspase-8. Interacts with FADD.

Functionally, inhibits TNFRSF1A, TNFRSF6, TNFRSF10 and TNFRSF12 induced apoptosis. May interfere with caspase-8 recruitment and activation at the death-inducing signaling complex (DISC). May lead to higher virus production and contribute to virus persistence and oncogenicity. This chain is Viral CASP8 and FADD-like apoptosis regulator, found in Equus caballus (Horse).